A 263-amino-acid polypeptide reads, in one-letter code: Energy-coupling factor transporter transmembrane protein EcfT (263 aa).

Helical transmembrane passes span 22–42 (IIFAFCFIPLVFLANNAATNI), 69–89 (ILFLIIFTFIIQLLFTREGAV), 105–125 (LAIIVSLRFFYLVSITTLVTL), and 243–263 (TGLILLLVALGLLLVYLRGGF).

It belongs to the energy-coupling factor EcfT family. As to quaternary structure, forms a stable energy-coupling factor (ECF) transporter complex composed of 2 membrane-embedded substrate-binding proteins (S component), 2 ATP-binding proteins (A component) and 2 transmembrane proteins (T component). May be able to interact with more than 1 S component at a time.

Its subcellular location is the cell membrane. Functionally, transmembrane (T) component of an energy-coupling factor (ECF) ABC-transporter complex. Unlike classic ABC transporters this ECF transporter provides the energy necessary to transport a number of different substrates. The polypeptide is Energy-coupling factor transporter transmembrane protein EcfT (Exiguobacterium sibiricum (strain DSM 17290 / CCUG 55495 / CIP 109462 / JCM 13490 / 255-15)).